A 299-amino-acid chain; its full sequence is HTH-type transcriptional regulator ArgP (299 aa).

An HTH lysR-type domain is found at 2–58; sequence FDYKLLSALAAVIEQAGFERAAQVLGLSQSAISQRIKLLEARVGQPVLVRVTPPAPT. The segment at residues 19–38 is a DNA-binding region (H-T-H motif); that stretch reads FERAAQVLGLSQSAISQRIK.

It belongs to the LysR transcriptional regulatory family. In terms of assembly, homodimer.

In terms of biological role, controls the transcription of genes involved in arginine and lysine metabolism. This is HTH-type transcriptional regulator ArgP from Pseudomonas fluorescens (strain ATCC BAA-477 / NRRL B-23932 / Pf-5).